The following is a 401-amino-acid chain: SVP1-like protein 2 (401 aa).

WD repeat units lie at residues 222–262 (AHKN…LIHE) and 267–306 (LDRALIYDMQWNGKGDKLAVVSDKFTLHIFQINEDLDKRH).

It belongs to the WD repeat PROPPIN family.

It is found in the vacuole membrane. The protein resides in the cytoplasmic vesicle membrane. Its function is as follows. Involved in mitochondrial or peroxisomal functions and amino acid signaling pathways. The polypeptide is SVP1-like protein 2 (HSV2) (Eremothecium gossypii (strain ATCC 10895 / CBS 109.51 / FGSC 9923 / NRRL Y-1056) (Yeast)).